Reading from the N-terminus, the 391-residue chain is Phosphoglycerate kinase (391 aa).

Residues 21 to 23, Arg36, 59 to 62, Arg113, and Arg146 contribute to the substrate site; these read DMN and HLGR. ATP-binding positions include Lys197, Glu319, and 345-348; that span reads GGDT.

Belongs to the phosphoglycerate kinase family. As to quaternary structure, monomer.

It localises to the cytoplasm. It catalyses the reaction (2R)-3-phosphoglycerate + ATP = (2R)-3-phospho-glyceroyl phosphate + ADP. It participates in carbohydrate degradation; glycolysis; pyruvate from D-glyceraldehyde 3-phosphate: step 2/5. The sequence is that of Phosphoglycerate kinase from Chromobacterium violaceum (strain ATCC 12472 / DSM 30191 / JCM 1249 / CCUG 213 / NBRC 12614 / NCIMB 9131 / NCTC 9757 / MK).